Here is a 191-residue protein sequence, read N- to C-terminus: MKLLLLLCLGLTLASSHKEAGQDVVTSNFDASKIAGEWYSILLASDAKENIEENGSMRVFVEHIRVLDNSSLAFKFQRKVNGECTDFYAVCDKVGDGVYTVAYYGENKFRLLEVNYSDYVILHLVNVNGDKTFQLMEFYGRKPDVEPKLKDKFVEICQQYGIIKENIIDLTKIDRCFQLRGSGGVQESSAE.

The signal sequence occupies residues 1-16; sequence MKLLLLLCLGLTLASS. Asparagine 69 carries N-linked (GlcNAc...) asparagine glycosylation. Residues cysteine 84 and cysteine 176 are joined by a disulfide bond.

Belongs to the calycin superfamily. Lipocalin family. As to quaternary structure, homodimer. As to expression, in the submaxillary salivary glands of mature male pigs, but absent from that of females. Expression was much lower in submaxillary glands of castrated male pigs than in sexually mature individuals.

Its subcellular location is the secreted. Binds pheromones, the pheromones are released from the saliva of males and affect the sexual behavior of females. The protein is Salivary lipocalin (SAL1) of Sus scrofa (Pig).